Reading from the N-terminus, the 96-residue chain is Large ribosomal subunit protein bL25 (96 aa).

This sequence belongs to the bacterial ribosomal protein bL25 family. In terms of assembly, part of the 50S ribosomal subunit; part of the 5S rRNA/L5/L18/L25 subcomplex. Contacts the 5S rRNA. Binds to the 5S rRNA independently of L5 and L18.

Functionally, this is one of the proteins that binds to the 5S RNA in the ribosome where it forms part of the central protuberance. In Francisella tularensis subsp. holarctica (strain FTNF002-00 / FTA), this protein is Large ribosomal subunit protein bL25.